Here is a 501-residue protein sequence, read N- to C-terminus: Serine/threonine-protein kinase pelle (501 aa).

A disordered region spans residues 1-25 (MSGVQTAEAEAQAQNQANGNRTRSR). Residues 7 to 18 (AEAEAQAQNQAN) are compositionally biased toward low complexity. The Death domain occupies 55–121 (WQQLATAVKL…NAMRLIKDYV (67 aa)). A disordered region spans residues 144-176 (DSSAKVNNGPPFPSSSGVSNSNNNRTSTTATEE). Positions 149 to 167 (VNNGPPFPSSSGVSNSNNN) are enriched in low complexity. The 287-residue stretch at 213–499 (WSPDNRLGQG…AVLKRFEPFV (287 aa)) folds into the Protein kinase domain. ATP contacts are provided by residues 219-227 (LGQGGFGDV) and Lys-240. The active-site Proton acceptor is Asp-346. ATP contacts are provided by residues 348 to 351 (KPAN) and Asp-364.

This sequence belongs to the protein kinase superfamily. TKL Ser/Thr protein kinase family. Pelle subfamily. Interacts (via Death domain) with tub (via Death domain). Interacts with Pellino (Pli).

The protein localises to the cell membrane. It is found in the cytoplasm. The catalysed reaction is L-seryl-[protein] + ATP = O-phospho-L-seryl-[protein] + ADP + H(+). It catalyses the reaction L-threonyl-[protein] + ATP = O-phospho-L-threonyl-[protein] + ADP + H(+). Functionally, plays an essential role in the Tl receptor signaling pathway that establishes embryonic dorsoventral polarity; the signal directs import of dl into ventral and ventrolateral nuclei, thereby establishing dorsoventral polarity. Tub recruits pll to the plasma membrane and protein-protein interaction activates pll. This is Serine/threonine-protein kinase pelle (pll) from Drosophila melanogaster (Fruit fly).